Reading from the N-terminus, the 68-residue chain is Protein SlyX homolog (68 aa).

It belongs to the SlyX family.

The protein is Protein SlyX homolog of Pseudomonas fluorescens (strain SBW25).